Reading from the N-terminus, the 367-residue chain is Zinc finger CCCH domain-containing protein 56 (367 aa).

Residues 38-80 (YNSQWNADGGGGGSSRAGSEQPPPGKKSRGGGGGEGGGNTSKS) are disordered. Residues 67–76 (GGGGGEGGGN) show a composition bias toward gly residues. C3H1-type zinc fingers lie at residues 87–114 (FFKTKLCCKFRAGTCPYVTNCNFAHGME), 169–197 (AYKGRHCKKFYTDEGCPYGDACTFLHDEQ), and 245–273 (NWKTRICNKWEMTGYCPFGSKCHFAHGAA).

This is Zinc finger CCCH domain-containing protein 56 from Oryza sativa subsp. japonica (Rice).